The chain runs to 514 residues: Maturase K (514 aa).

Belongs to the intron maturase 2 family. MatK subfamily.

It is found in the plastid. The protein resides in the chloroplast. Its function is as follows. Usually encoded in the trnK tRNA gene intron. Probably assists in splicing its own and other chloroplast group II introns. The chain is Maturase K from Dioon spinulosum (Gum palm).